The chain runs to 1206 residues: MIDVNNFHYMKIGLASPEKIRSWSYGEVKKPETINYRTLKPEKDGLFCERIFGPTKDWECSCGKYKRVRYKGMVCDRCGVEVTKSKVRRERMGHIELAAPVSHIWYFKGIPSRMGLLLDMSPRALEEVIYFASYVVVDPGPTGLEKKSLLSEAEFREYYDKYPGQFVAKMGAEGIKDLLEEINLDEELKSLRDELESATGQRLTRAIKRLEVVESFRNSGNNPAWMILDVLPIIPPEIRPMVQLDGGRFATSDLNDLYRRVINRNNRLKRLLDLGAPGIIVQNEKRMLQEAVDALIDNGRRGRPVTGPGNRPLKSLSHMLKGKQGRFRQNLLGKRVDYSGRSVIAVGPSLKMYQCGLPKEMALELFKPFVMKELVQREIATNIKNAKSKIERMDDEVWDVLEDVIREHPVLLNRAPTLHRLGIQAFEPTLVEGRAIRLHPLVTTAYNADFDGDQMAVHVPLSKEAQAEARMLMLAAQNILNPKDGKPVVTPSQDMVLGNYYLTLERKDAMNTGTIFNDTNEVLKAYANGYVHLHTRIGVHAKSFNNPTFTEAQNNKILATSVGKVIFNEIIPDSFAFINEPSQTNLEGKTPDKYFIDSTQLGEGGLKAYFEEQELIEPFNKKFLGNIIAEVFNRFSITDTSMMLDRMKDLGFKFSSKAGITVGVADIVVLPDKQDILDEHEKLVERVSKQFNRGLITEDERYNAVVEIWTDAKDQIQGELMQSLEKTNPIFMMSDSGARGNASNFTQLAGMRGLMAAPSGKIIELPITSSFREGLTVLEYFISTHGARKGLADTALKTADSGYLTRRLVDVAQDVIVREEDCGTDRGLLVSDIKEGTEMIEPFIERIEGRYSKETIRHPETDEIIIRPDELITAEIAKKITDAGIEQMYIRSAFTCNTRHGVCEKCYGKNLATGEKVEVGEAVGTIAAQSIGEPGTQLTMRTFHTGGVAGSDITQGLPRIQEIFEARNPKGQAVITEIEGVVEDIKLAKDRQQEIVVKGANETRSYLASGTSRLKVEVGQSVERGEVLTEGSIEPKNFLAVAGLNATESYLLKEVQKVYRMQGVEIDDKHVEVMVRQMLRKVRIIEAGDTKLLPGSLVDIHSFTDANREAFKERKRPATAKPVLLGITKASLETESFLSAASFQETTRVLTDAAIKGKRDDLLGLKENVIIGKLIPAGTGMRRYSDVKYDKAETPVTETEEAEIIE.

Zn(2+) is bound by residues Cys60, Cys62, Cys75, and Cys78. The Mg(2+) site is built by Asp449, Asp451, and Asp453. Zn(2+) contacts are provided by Cys822, Cys896, Cys903, and Cys906.

Belongs to the RNA polymerase beta' chain family. In terms of assembly, the RNAP catalytic core consists of 2 alpha, 1 beta, 1 beta' and 1 omega subunit. When a sigma factor is associated with the core the holoenzyme is formed, which can initiate transcription. Requires Mg(2+) as cofactor. Zn(2+) serves as cofactor.

It carries out the reaction RNA(n) + a ribonucleoside 5'-triphosphate = RNA(n+1) + diphosphate. DNA-dependent RNA polymerase catalyzes the transcription of DNA into RNA using the four ribonucleoside triphosphates as substrates. This Staphylococcus haemolyticus (strain JCSC1435) protein is DNA-directed RNA polymerase subunit beta'.